The chain runs to 412 residues: Peptidase T (412 aa).

Histidine 81 provides a ligand contact to Zn(2+). Aspartate 83 is a catalytic residue. A Zn(2+)-binding site is contributed by aspartate 144. The Proton acceptor role is filled by glutamate 178. Residues glutamate 179, aspartate 201, and histidine 383 each contribute to the Zn(2+) site.

This sequence belongs to the peptidase M20B family. Requires Zn(2+) as cofactor.

It localises to the cytoplasm. The catalysed reaction is Release of the N-terminal residue from a tripeptide.. Cleaves the N-terminal amino acid of tripeptides. This chain is Peptidase T, found in Bacillus cereus (strain ATCC 14579 / DSM 31 / CCUG 7414 / JCM 2152 / NBRC 15305 / NCIMB 9373 / NCTC 2599 / NRRL B-3711).